The following is an 89-amino-acid chain: ATP synthase subunit c (89 aa).

A run of 2 helical transmembrane segments spans residues 3-23 (IILG…AIGA) and 53-73 (FILA…ALMF).

It belongs to the ATPase C chain family. As to quaternary structure, F-type ATPases have 2 components, F(1) - the catalytic core - and F(0) - the membrane proton channel. F(1) has five subunits: alpha(3), beta(3), gamma(1), delta(1), epsilon(1). F(0) has three main subunits: a(1), b(2) and c(10-14). The alpha and beta chains form an alternating ring which encloses part of the gamma chain. F(1) is attached to F(0) by a central stalk formed by the gamma and epsilon chains, while a peripheral stalk is formed by the delta and b chains.

It localises to the cell inner membrane. Functionally, f(1)F(0) ATP synthase produces ATP from ADP in the presence of a proton or sodium gradient. F-type ATPases consist of two structural domains, F(1) containing the extramembraneous catalytic core and F(0) containing the membrane proton channel, linked together by a central stalk and a peripheral stalk. During catalysis, ATP synthesis in the catalytic domain of F(1) is coupled via a rotary mechanism of the central stalk subunits to proton translocation. In terms of biological role, key component of the F(0) channel; it plays a direct role in translocation across the membrane. A homomeric c-ring of between 10-14 subunits forms the central stalk rotor element with the F(1) delta and epsilon subunits. In Verminephrobacter eiseniae (strain EF01-2), this protein is ATP synthase subunit c.